Reading from the N-terminus, the 241-residue chain is Ubiquinone biosynthesis O-methyltransferase (241 aa).

Residues R42, G62, D83, and M127 each coordinate S-adenosyl-L-methionine.

It belongs to the methyltransferase superfamily. UbiG/COQ3 family.

The catalysed reaction is a 3-demethylubiquinol + S-adenosyl-L-methionine = a ubiquinol + S-adenosyl-L-homocysteine + H(+). It catalyses the reaction a 3-(all-trans-polyprenyl)benzene-1,2-diol + S-adenosyl-L-methionine = a 2-methoxy-6-(all-trans-polyprenyl)phenol + S-adenosyl-L-homocysteine + H(+). The protein operates within cofactor biosynthesis; ubiquinone biosynthesis. In terms of biological role, O-methyltransferase that catalyzes the 2 O-methylation steps in the ubiquinone biosynthetic pathway. This chain is Ubiquinone biosynthesis O-methyltransferase, found in Pectobacterium atrosepticum (strain SCRI 1043 / ATCC BAA-672) (Erwinia carotovora subsp. atroseptica).